The chain runs to 74 residues: UPF0435 protein GWCH70_0415 (74 aa).

Belongs to the UPF0435 family.

This Geobacillus sp. (strain WCH70) protein is UPF0435 protein GWCH70_0415.